Reading from the N-terminus, the 259-residue chain is uncharacterized protein (259 aa).

The active site involves E46.

This sequence belongs to the PhzF family.

This is an uncharacterized protein from Pseudomonas aeruginosa (strain ATCC 15692 / DSM 22644 / CIP 104116 / JCM 14847 / LMG 12228 / 1C / PRS 101 / PAO1).